Reading from the N-terminus, the 668-residue chain is S-adenosyl-L-methionine-dependent tRNA 4-demethylwyosine synthase TYW1B (668 aa).

The region spanning 37–191 (CVQIVIEMQG…NFRAWKTKFI (155 aa)) is the Flavodoxin-like domain. FMN-binding positions include 43 to 47 (EMQGF) and 130 to 162 (VFGL…HRVM). Residues 202 to 269 (RKKSCGGHCK…QSLNSIVDVE (68 aa)) form a disordered region. 2 stretches are compositionally biased toward basic and acidic residues: residues 213–223 (GKCESHQHGSE) and 233–243 (DELHHRDTKEE). Residues 244–255 (EPFESSSEEEFG) are compositionally biased toward acidic residues. In terms of domain architecture, Radical SAM core spans 336-580 (LWNESHRCME…VDLIPEYEIA (245 aa)). [4Fe-4S] cluster contacts are provided by C352, C356, and C359.

This sequence belongs to the TYW1 family. [4Fe-4S] cluster serves as cofactor.

The catalysed reaction is N(1)-methylguanosine(37) in tRNA(Phe) + pyruvate + S-adenosyl-L-methionine = 4-demethylwyosine(37) in tRNA(Phe) + 5'-deoxyadenosine + L-methionine + CO2 + H2O. The protein operates within tRNA modification; wybutosine-tRNA(Phe) biosynthesis. Functionally, probable component of the wybutosine biosynthesis pathway. Wybutosine is a hyper modified guanosine with a tricyclic base found at the 3'-position adjacent to the anticodon of eukaryotic phenylalanine tRNA. Catalyzes the condensation of N-methylguanine with 2 carbon atoms from pyruvate to form the tricyclic 4-demethylwyosine, an intermediate in wybutosine biosynthesis. This Homo sapiens (Human) protein is S-adenosyl-L-methionine-dependent tRNA 4-demethylwyosine synthase TYW1B (TYW1B).